The primary structure comprises 875 residues: Alanine--tRNA ligase (875 aa).

A disordered region spans residues 426-445 (ERSRKNTVKNKNDSDSIFQD). 4 residues coordinate Zn(2+): His561, His565, Cys663, and His667.

Belongs to the class-II aminoacyl-tRNA synthetase family. Zn(2+) is required as a cofactor.

It is found in the cytoplasm. It carries out the reaction tRNA(Ala) + L-alanine + ATP = L-alanyl-tRNA(Ala) + AMP + diphosphate. In terms of biological role, catalyzes the attachment of alanine to tRNA(Ala) in a two-step reaction: alanine is first activated by ATP to form Ala-AMP and then transferred to the acceptor end of tRNA(Ala). Also edits incorrectly charged Ser-tRNA(Ala) and Gly-tRNA(Ala) via its editing domain. In Chlamydia muridarum (strain MoPn / Nigg), this protein is Alanine--tRNA ligase.